The sequence spans 940 residues: Isoleucine--tRNA ligase (940 aa).

The short motif at 58-68 (PYANGAIHIGH) is the 'HIGH' region element. E564 is an L-isoleucyl-5'-AMP binding site. A 'KMSKS' region motif is present at residues 605-609 (KMSKS). An ATP-binding site is contributed by K608. Residues C903, C906, C923, and C926 each contribute to the Zn(2+) site.

It belongs to the class-I aminoacyl-tRNA synthetase family. IleS type 1 subfamily. Monomer. Requires Zn(2+) as cofactor.

Its subcellular location is the cytoplasm. It catalyses the reaction tRNA(Ile) + L-isoleucine + ATP = L-isoleucyl-tRNA(Ile) + AMP + diphosphate. Catalyzes the attachment of isoleucine to tRNA(Ile). As IleRS can inadvertently accommodate and process structurally similar amino acids such as valine, to avoid such errors it has two additional distinct tRNA(Ile)-dependent editing activities. One activity is designated as 'pretransfer' editing and involves the hydrolysis of activated Val-AMP. The other activity is designated 'posttransfer' editing and involves deacylation of mischarged Val-tRNA(Ile). The polypeptide is Isoleucine--tRNA ligase (Nitrosococcus oceani (strain ATCC 19707 / BCRC 17464 / JCM 30415 / NCIMB 11848 / C-107)).